Consider the following 135-residue polypeptide: Protein PsiE homolog (135 aa).

Transmembrane regions (helical) follow at residues 20 to 40, 54 to 74, 82 to 102, and 107 to 127; these read VGLIMLAAILVVFLVKETIHL, YMLIEGIVIYFLYFEFIALIV, HFPLRYFIYIGITAIIRLIIV, and PIDTLIYSGSILVLVVTLYLA.

It belongs to the PsiE family.

The protein localises to the cell inner membrane. This chain is Protein PsiE homolog, found in Yersinia pestis (strain Pestoides F).